Reading from the N-terminus, the 433-residue chain is E3 ubiquitin-protein ligase RNF26 (433 aa).

5 consecutive transmembrane segments (helical) span residues 24 to 44, 60 to 80, 147 to 169, 183 to 203, and 220 to 240; these read LNFLLVSSLLASLAWLLAFVY, GVLLSLLALIEAVVRFTCGGL, VINSLVNICLIGTQNLFSLVLAL, VVAAFLAHISSSAVAMAILLW, and LASFVLVNLTGLVLLACVLAV. The RING-type zinc finger occupies 380-422; that stretch reads CVICQDQSKTVLLLPCRHLCLCQACTEILMRHPVYHRNCPLCR.

Interacts with INCA1. Interacts with TMEM43, ENDOD1, TMEM33 and TMED1 to form a complex capable of modulating innate immune signaling through the cGAS-STING pathway. Interacts with UBE2J1; this interaction is important for SQSTM1 ubiquitination. Ubiquitous. Up-regulated in several cancer cell lines.

Its subcellular location is the endoplasmic reticulum membrane. The enzyme catalyses S-ubiquitinyl-[E2 ubiquitin-conjugating enzyme]-L-cysteine + [acceptor protein]-L-lysine = [E2 ubiquitin-conjugating enzyme]-L-cysteine + N(6)-ubiquitinyl-[acceptor protein]-L-lysine.. Its pathway is protein modification; protein ubiquitination. E3 ubiquitin-protein ligase that plays a key role in endosome organization by retaining vesicles in the perinuclear cloud. Acts as a platform for perinuclear positioning of the endosomal system by mediating ubiquitination of SQSTM1 through interaction with the ubiquitin conjugating enzyme UBE2J1. Ubiquitinated SQSTM1 attracts specific vesicle-associated adapters, forming a molecular bridge that restrains cognate vesicles in the perinuclear region and organizes the endosomal pathway for efficient cargo transport. Also acts as a regulator of type I interferon production in response to viral infection by mediating the formation of 'Lys-11'-linked polyubiquitin chains on TMEM173/STING, leading to stabilize TMEM173/STING. Also required to limit type I interferon response by promoting autophagic degradation of IRF3. This is E3 ubiquitin-protein ligase RNF26 from Homo sapiens (Human).